Consider the following 124-residue polypeptide: Glutaredoxin-2 (124 aa).

A disulfide bridge links cysteine 13 with cysteine 16.

It belongs to the glutaredoxin family. As to quaternary structure, homodimer.

It is found in the host cytoplasm. In terms of biological role, glutaredoxin necessary for virion morphogenesis and virus replication. Functions as a thiol-disulfide transfer protein between membrane-associated OPG128 and substrates OPG095 or OPG053. The complete pathway for formation of disulfide bonds in intracellular virion membrane proteins sequentially involves oxidation of OPG072, OPG128 and OPG088. Exhibit thioltransferase and dehydroascorbate reductase activities in vitro. This chain is Glutaredoxin-2 (OPG088), found in Camelus.